We begin with the raw amino-acid sequence, 230 residues long: Probable methylthioribulose-1-phosphate dehydratase (230 aa).

Residue Cys87 participates in substrate binding. Residues His105 and His107 each coordinate Zn(2+). The Proton donor/acceptor role is filled by Glu129. His185 is a binding site for Zn(2+).

The protein belongs to the aldolase class II family. MtnB subfamily. Requires Zn(2+) as cofactor.

The protein resides in the cytoplasm. The catalysed reaction is 5-(methylsulfanyl)-D-ribulose 1-phosphate = 5-methylsulfanyl-2,3-dioxopentyl phosphate + H2O. The protein operates within amino-acid biosynthesis; L-methionine biosynthesis via salvage pathway; L-methionine from S-methyl-5-thio-alpha-D-ribose 1-phosphate: step 2/6. Catalyzes the dehydration of methylthioribulose-1-phosphate (MTRu-1-P) into 2,3-diketo-5-methylthiopentyl-1-phosphate (DK-MTP-1-P). The chain is Probable methylthioribulose-1-phosphate dehydratase from Drosophila virilis (Fruit fly).